We begin with the raw amino-acid sequence, 602 residues long: Ligand-dependent nuclear receptor corepressor-like protein (602 aa).

Residues 104–124 form a disordered region; the sequence is PSLDSSQSTPTEELSSQGQSN. Polar residues predominate over residues 106–124; it reads LDSSQSTPTEELSSQGQSN. Glycyl lysine isopeptide (Lys-Gly) (interchain with G-Cter in SUMO2) cross-links involve residues Lys242, Lys319, Lys340, and Lys397. Disordered stretches follow at residues 495-521 and 564-602; these read TVDGTSENTEDGLDRKDSKQPRKKRGR and ERSGTLKTPPKKKLRLPDTGLYNMTDSGTGSCKNSSKPV. Residues 516 to 568 form the HTH psq-type domain; sequence RKKRGRYRQYDHEIMEEAIAMVMSGKMSVSKAQGIYGVPHSTLEYKVKERSGT. The H-T-H motif DNA-binding region spans 544–564; sequence VSKAQGIYGVPHSTLEYKVKE. The segment covering 585–602 has biased composition (polar residues); the sequence is YNMTDSGTGSCKNSSKPV.

The protein resides in the nucleus. Functionally, may act as transcription activator that binds DNA elements with the sequence 5'-CCCTATCGATCGATCTCTACCT-3'. May play a role in spermatogenesis. The polypeptide is Ligand-dependent nuclear receptor corepressor-like protein (LCORL) (Homo sapiens (Human)).